Here is a 235-residue protein sequence, read N- to C-terminus: Ribosomal RNA small subunit methyltransferase G (235 aa).

Residues G98, M103, 149–150 (VE), and R164 each bind S-adenosyl-L-methionine.

It belongs to the methyltransferase superfamily. RNA methyltransferase RsmG family.

The protein localises to the cytoplasm. The catalysed reaction is guanosine(527) in 16S rRNA + S-adenosyl-L-methionine = N(7)-methylguanosine(527) in 16S rRNA + S-adenosyl-L-homocysteine. In terms of biological role, specifically methylates the N7 position of guanine in position 527 of 16S rRNA. This Cupriavidus metallidurans (strain ATCC 43123 / DSM 2839 / NBRC 102507 / CH34) (Ralstonia metallidurans) protein is Ribosomal RNA small subunit methyltransferase G.